Here is a 42-residue protein sequence, read N- to C-terminus: uncharacterized protein (42 aa).

The protein resides in the cytoplasm. This is an uncharacterized protein from Escherichia coli (strain K12).